An 875-amino-acid polypeptide reads, in one-letter code: MSKSTAEIRQAFLDFFHSKGHQVVSSSSLVPNNDPTLLFTNAGMNQFKDVFLGLDKRAYSRATTSQRCVRAGGKHNDLENVGYTARHHTFFEMLGNFSFGDYFKHDAISFAWELLTGEQWFNLPKEKLWVTVYETDDEAYEIWANDIGIPRERIIRIGDNKGSAFASDNFWQMGDTGPCGPCTEIFFDHGDHIWGGPPGSAEEDGDRYIEIWNIVFMQFNRQSDGTMLPLPKPSVDTGMGLERIAAVLQHVNSNYEIDLFRDLIKAVAEVTGATDLSSKSLRVIADHIRSCAFLISDGVIPSNENRGYVLRRIIRRAIRHGNMLGAKETFFYKLVAPLIAVMGPAADELKQQQAMVEQVLKTEEEQFARTLERGLALLDEELSKLTGDTLDGETAFRLYDTYGFPVDLTADVCRERNLKVDEAGFEQAMEAQRRRARESSGFGADYNNLIRVDSASQFSGYNHVHQQATVTALFRNGEAVDEIHEGEEAVVVLNQTPFYGESGGQVGDTGELKNATATFAVADTQKYGQAIGHLGQLTHGTLRVNHSIDAQVDVARRNRIRLNHSATHLLHAALRKTLGDHVAQKGSLVNDKYLRFDFSHFEAMKPEQIRLVEDMVNEQIRRNMPVQTEVMELDAAKEKGAMALFGEKYDDQVRVLTMGDFSTELCGGIHASRTGDIGLFRILSESGTAAGIRRIEAVTGEGAIALLHQQSDLLQDVAHLVKGDTNNLADKVRAVLDRSKMLERELQQLKDQQAAQESASLSSNAKLVNGVKLLVSQLDNVEPKMLRTMVDDLKNQLGSAIIVLATTADDKVSLIVGVTKDLTSKVKAGELIADIAQQVGGKGGGRPDMAQAGGTNVQALPSALASVEAWVASRL.

Residues His-564, His-568, Cys-666, and His-670 each coordinate Zn(2+).

It belongs to the class-II aminoacyl-tRNA synthetase family. As to quaternary structure, homotetramer. Zn(2+) is required as a cofactor.

The protein localises to the cytoplasm. The catalysed reaction is tRNA(Ala) + L-alanine + ATP = L-alanyl-tRNA(Ala) + AMP + diphosphate. Its function is as follows. Catalyzes the attachment of alanine to tRNA(Ala) in a two-step reaction: alanine is first activated by ATP to form Ala-AMP and then transferred to the acceptor end of tRNA(Ala). Also edits incorrectly charged Ser-tRNA(Ala) and Gly-tRNA(Ala) via its editing domain. The polypeptide is Alanine--tRNA ligase (Yersinia enterocolitica serotype O:8 / biotype 1B (strain NCTC 13174 / 8081)).